Reading from the N-terminus, the 351-residue chain is 3-ketosteroid-9-alpha-monooxygenase, ferredoxin reductase component (351 aa).

Residues 10–116 (SRSVILTVSA…LPPAGVFTPK (107 aa)) form the FAD-binding FR-type domain. The 2Fe-2S ferredoxin-type domain occupies 264–351 (ATVEVELDGE…PVTDHLKIEF (88 aa)). 4 residues coordinate [2Fe-2S] cluster: C300, C305, C308, and C338.

As to quaternary structure, the two-component system 3-ketosteroid-9-alpha-monooxygenase is composed of an oxygenase component KshA and a reductase component KshB. FAD is required as a cofactor. Requires [2Fe-2S] cluster as cofactor.

It carries out the reaction androsta-1,4-diene-3,17-dione + 2 reduced [2Fe-2S]-[ferredoxin] + O2 + 2 H(+) = 9alpha-hydroxyandrosta-1,4-diene-3,17-dione + 2 oxidized [2Fe-2S]-[ferredoxin] + H2O. The protein operates within steroid metabolism; cholesterol degradation. With respect to regulation, KSH activity is completely inhibited by zinc ions. KshB is specifically inhibited by Cu(2+) ions. In terms of biological role, probably involved in the degradation of cholesterol. In vitro, catalyzes the introduction of a 9alpha-hydroxyl moiety into the ring B of 3-ketosteroid substrates such as 1,4-androstadiene-3,17-dione (ADD), 4-androstene-3,17-dione (AD), 4-androstene-17beta-ol-3-one (testosterone), 4-pregnene-3,20-dione (progesterone), 19-nor-4-androstene-3,17-dione (nordion), 1-(5alpha)-androstene-3,17-dione, 5alpha-androstane-3,17-dione and 5beta-androstane-3,17-dione. KSH has the highest activity with 3-keto-Delta4 steroid substrates. The sequence is that of 3-ketosteroid-9-alpha-monooxygenase, ferredoxin reductase component from Rhodococcus rhodochrous.